The following is a 218-amino-acid chain: Small ribosomal subunit protein uS3 (218 aa).

The residue at position 1 (methionine 1) is an N-acetylmethionine. Positions 23–95 constitute a KH type-2 domain; that stretch reads LNELFTREFN…TVVLFAEKIL (73 aa).

This sequence belongs to the universal ribosomal protein uS3 family.

The protein is Small ribosomal subunit protein uS3 (rps3) of Dictyostelium discoideum (Social amoeba).